The following is a 423-amino-acid chain: 3-isopropylmalate dehydratase large subunit 1 (423 aa).

The [4Fe-4S] cluster site is built by Cys-302, Cys-362, and Cys-365.

Belongs to the aconitase/IPM isomerase family. LeuC type 2 subfamily. In terms of assembly, heterodimer of LeuC and LeuD. [4Fe-4S] cluster serves as cofactor.

The enzyme catalyses (2R,3S)-3-isopropylmalate = (2S)-2-isopropylmalate. It participates in amino-acid biosynthesis; L-leucine biosynthesis; L-leucine from 3-methyl-2-oxobutanoate: step 2/4. In terms of biological role, catalyzes the isomerization between 2-isopropylmalate and 3-isopropylmalate, via the formation of 2-isopropylmaleate. The sequence is that of 3-isopropylmalate dehydratase large subunit 1 from Pyrococcus abyssi (strain GE5 / Orsay).